The following is a 701-amino-acid chain: Elongation factor G (701 aa).

Residues Asn11–Leu287 enclose the tr-type G domain. GTP-binding positions include Ala20–Thr27, Asp84–His88, and Asn138–Asp141.

Belongs to the TRAFAC class translation factor GTPase superfamily. Classic translation factor GTPase family. EF-G/EF-2 subfamily.

It localises to the cytoplasm. Its function is as follows. Catalyzes the GTP-dependent ribosomal translocation step during translation elongation. During this step, the ribosome changes from the pre-translocational (PRE) to the post-translocational (POST) state as the newly formed A-site-bound peptidyl-tRNA and P-site-bound deacylated tRNA move to the P and E sites, respectively. Catalyzes the coordinated movement of the two tRNA molecules, the mRNA and conformational changes in the ribosome. The protein is Elongation factor G of Mycobacterium sp. (strain JLS).